We begin with the raw amino-acid sequence, 295 residues long: CBY1-interacting BAR domain-containing protein 1 (295 aa).

The N-terminal 49 residues, 1 to 49, are a transit peptide targeting the mitochondrion; the sequence is MMSRTPDARARDTQTKQIQENITSVEKHFGDLCQLFAAYVRKTARLRDK. Positions 12-222 are BAR-like; it reads DTQTKQIQEN…NVDEEGDLEV (211 aa). Positions 111 to 185 form a coiled coil; sequence KREDLKQTQS…KQKIRDIKKV (75 aa). The segment covering 243-265 has biased composition (polar residues); it reads SKLSLNRTGTSMSKSGTMQSRTS. Residues 243-295 form a disordered region; it reads SKLSLNRTGTSMSKSGTMQSRTSSRQRKRDDEEDEEEDDEDEDDLEEVTDDEH. Residues 273–295 show a composition bias toward acidic residues; the sequence is DEEDEEEDDEDEDDLEEVTDDEH.

Belongs to the CIBAR family.

It localises to the cytoplasm. Its subcellular location is the cytoskeleton. It is found in the microtubule organizing center. The protein localises to the centrosome. The protein resides in the centriole. It localises to the cell projection. Its subcellular location is the cilium. It is found in the nucleus. The protein localises to the mitochondrion inner membrane. The protein resides in the flagellum. Functionally, plays a critical role in regulating mitochondrial ultrastructure and function by maintaining the integrity of mitochondrial morphology, particularly the organization of cristae. Plays a crucial role in ciliogenesis. Plays a key role in the correct positioning of the annulus, a septin-based ring structure in the sperm flagellum, serving both as a physical barrier and a membrane diffusion barrier that separates the midpiece (MP) from the principal piece (PP). The sequence is that of CBY1-interacting BAR domain-containing protein 1 (cibar1) from Danio rerio (Zebrafish).